The chain runs to 94 residues: Phosphoribosyl-ATP pyrophosphatase (94 aa).

The protein belongs to the PRA-PH family.

The protein resides in the cytoplasm. It catalyses the reaction 1-(5-phospho-beta-D-ribosyl)-ATP + H2O = 1-(5-phospho-beta-D-ribosyl)-5'-AMP + diphosphate + H(+). The protein operates within amino-acid biosynthesis; L-histidine biosynthesis; L-histidine from 5-phospho-alpha-D-ribose 1-diphosphate: step 2/9. This is Phosphoribosyl-ATP pyrophosphatase from Pyrobaculum islandicum (strain DSM 4184 / JCM 9189 / GEO3).